We begin with the raw amino-acid sequence, 117 residues long: Large ribosomal subunit protein uL22 (117 aa).

The protein belongs to the universal ribosomal protein uL22 family. As to quaternary structure, part of the 50S ribosomal subunit.

Functionally, this protein binds specifically to 23S rRNA; its binding is stimulated by other ribosomal proteins, e.g. L4, L17, and L20. It is important during the early stages of 50S assembly. It makes multiple contacts with different domains of the 23S rRNA in the assembled 50S subunit and ribosome. Its function is as follows. The globular domain of the protein is located near the polypeptide exit tunnel on the outside of the subunit, while an extended beta-hairpin is found that lines the wall of the exit tunnel in the center of the 70S ribosome. The chain is Large ribosomal subunit protein uL22 from Synechococcus elongatus (strain ATCC 33912 / PCC 7942 / FACHB-805) (Anacystis nidulans R2).